A 573-amino-acid polypeptide reads, in one-letter code: Urease subunit alpha (573 aa).

In terms of domain architecture, Urease spans glycine 136 to phenylalanine 573. Positions 141, 143, and 224 each coordinate Ni(2+). Lysine 224 carries the post-translational modification N6-carboxylysine. Histidine 226 is a substrate binding site. Residues histidine 253 and histidine 279 each contribute to the Ni(2+) site. Catalysis depends on histidine 327, which acts as the Proton donor. A Ni(2+)-binding site is contributed by aspartate 367.

This sequence belongs to the metallo-dependent hydrolases superfamily. Urease alpha subunit family. As to quaternary structure, heterotrimer of UreA (gamma), UreB (beta) and UreC (alpha) subunits. Three heterotrimers associate to form the active enzyme. Ni cation serves as cofactor. In terms of processing, carboxylation allows a single lysine to coordinate two nickel ions.

It is found in the cytoplasm. It catalyses the reaction urea + 2 H2O + H(+) = hydrogencarbonate + 2 NH4(+). It participates in nitrogen metabolism; urea degradation; CO(2) and NH(3) from urea (urease route): step 1/1. The chain is Urease subunit alpha from Mycobacterium sp. (strain JLS).